A 718-amino-acid chain; its full sequence is NF-kappa-B inhibitor zeta (718 aa).

A compositionally biased stretch (basic and acidic residues) spans 1 to 17 (MIVDKLLDDSRGGEGLR). Disordered regions lie at residues 1-20 (MIVDKLLDDSRGGEGLRDAA) and 58-108 (SAPG…RQQR). Residues 58 to 83 (SAPGSPGSDSSDFSSASSVSSCGAVE) are compositionally biased toward low complexity. The span at 84 to 97 (SRSRGGARAERQPV) shows a compositional bias: basic and acidic residues. Residues 108-130 (RGPFQGVRVKNSVKELLLHIRSH) enclose the OCA domain. Positions 164–179 (KRKGPDSLSDGPACKR) match the Nuclear localization signal motif. The tract at residues 186–211 (QFLTPPQTPTPGESMEDVHLNEPKQE) is disordered. A compositionally biased stretch (basic and acidic residues) spans 201–211 (EDVHLNEPKQE). The required for transcriptional activity stretch occupies residues 321-394 (AYEPNLFDGP…MVGHEMASDS (74 aa)). Positions 404–718 (MGNPMNTTQL…KSIQQRAPPY (315 aa)) are interaction with NFKB1/p50. ANK repeat units follow at residues 443-472 (DGDTFLHIAVAQGRRALSYVLARKMNALHM), 479-508 (NGQSAFQVAVAANQHLIVQDLVNIGAQVNT), 512-541 (WGRTPLHVCAEKGHSQVLQAIQKGAVGSNQ), 551-580 (DGLTPLHCAVIAHNAVVHELQRNQQPHSPE), 582-607 (QELLLKNKSLVDTIKCLIQMGAAVEA), 612-641 (SGRTALHLAAEEANLELIRLFLELPSCLSF), and 648-681 (NGNTALHVAASLQYRLTQLDAVRLLMRKGADPST).

In terms of assembly, interacts with NFKB1/p50. Interacts with RELA. Interacts with AKIRIN2. As to expression, expressed at high levels in peripheral blood leukocytes and lung, at moderate levels in liver, placenta, and at low levels in spleen, kidney, skeletal muscle and heart.

It is found in the nucleus. Involved in regulation of NF-kappa-B transcription factor complexes. Inhibits NF-kappa-B activity without affecting its nuclear translocation upon stimulation. Inhibits DNA-binding of RELA and NFKB1/p50, and of the NF-kappa-B p65-p50 heterodimer and the NF-kappa-B p50-p50 homodimer. Also seems to activate NF-kappa-B-mediated transcription. In vitro, upon association with NFKB1/p50 has transcriptional activation activity and, together with NFKB1/p50 and RELA, is recruited to LCN2 promoters. Promotes transcription of LCN2 and DEFB4. Is recruited to IL-6 promoters and activates IL-6 but decreases TNF-alpha production in response to LPS. Seems to be involved in the induction of inflammatory genes activated through TLR/IL-1 receptor signaling. Involved in the induction of T helper 17 cells (Th17) differentiation upon recognition of antigen by T cell antigen receptor (TCR). This Homo sapiens (Human) protein is NF-kappa-B inhibitor zeta (NFKBIZ).